Consider the following 214-residue polypeptide: Small ribosomal subunit protein uS5 (214 aa).

Residues 54-117 (LKYEVVDIKV…RDAKMNILPV (64 aa)) enclose the S5 DRBM domain.

It belongs to the universal ribosomal protein uS5 family. In terms of assembly, part of the 30S ribosomal subunit. Contacts protein S4.

Its function is as follows. With S4 and S12 plays an important role in translational accuracy. The sequence is that of Small ribosomal subunit protein uS5 from Saccharolobus islandicus (strain Y.N.15.51 / Yellowstone #2) (Sulfolobus islandicus).